Reading from the N-terminus, the 471-residue chain is Glutamate--tRNA ligase (471 aa).

The 'HIGH' region signature appears at 10-20 (PSPTGFLHIGG). The interval 117 to 137 (GRPPRYDGRWRDRPASERPTD) is disordered. The 'KMSKS' region motif lies at 239-243 (KLSKR). An ATP-binding site is contributed by K242.

The protein belongs to the class-I aminoacyl-tRNA synthetase family. Glutamate--tRNA ligase type 1 subfamily. In terms of assembly, monomer.

The protein resides in the cytoplasm. It catalyses the reaction tRNA(Glu) + L-glutamate + ATP = L-glutamyl-tRNA(Glu) + AMP + diphosphate. Functionally, catalyzes the attachment of glutamate to tRNA(Glu) in a two-step reaction: glutamate is first activated by ATP to form Glu-AMP and then transferred to the acceptor end of tRNA(Glu). The protein is Glutamate--tRNA ligase of Azorhizobium caulinodans (strain ATCC 43989 / DSM 5975 / JCM 20966 / LMG 6465 / NBRC 14845 / NCIMB 13405 / ORS 571).